We begin with the raw amino-acid sequence, 290 residues long: Acetyl-coenzyme A carboxylase carboxyl transferase subunit beta (290 aa).

The 264-residue stretch at 27–290 (LWHKCPSCEA…FTHSPSPVSA (264 aa)) folds into the CoA carboxyltransferase N-terminal domain. 4 residues coordinate Zn(2+): C31, C34, C50, and C53. The segment at 31–53 (CPSCEAVLYRPELEKTLDVCPKC) adopts a C4-type zinc-finger fold.

It belongs to the AccD/PCCB family. As to quaternary structure, acetyl-CoA carboxylase is a heterohexamer composed of biotin carboxyl carrier protein (AccB), biotin carboxylase (AccC) and two subunits each of ACCase subunit alpha (AccA) and ACCase subunit beta (AccD). Zn(2+) serves as cofactor.

It is found in the cytoplasm. The enzyme catalyses N(6)-carboxybiotinyl-L-lysyl-[protein] + acetyl-CoA = N(6)-biotinyl-L-lysyl-[protein] + malonyl-CoA. Its pathway is lipid metabolism; malonyl-CoA biosynthesis; malonyl-CoA from acetyl-CoA: step 1/1. Component of the acetyl coenzyme A carboxylase (ACC) complex. Biotin carboxylase (BC) catalyzes the carboxylation of biotin on its carrier protein (BCCP) and then the CO(2) group is transferred by the transcarboxylase to acetyl-CoA to form malonyl-CoA. The protein is Acetyl-coenzyme A carboxylase carboxyl transferase subunit beta of Pseudomonas aeruginosa (strain UCBPP-PA14).